The following is a 247-amino-acid chain: tRNA pseudouridine synthase A (247 aa).

Residue aspartate 53 is the Nucleophile of the active site. Tyrosine 111 provides a ligand contact to substrate.

The protein belongs to the tRNA pseudouridine synthase TruA family. In terms of assembly, homodimer.

It carries out the reaction uridine(38/39/40) in tRNA = pseudouridine(38/39/40) in tRNA. Functionally, formation of pseudouridine at positions 38, 39 and 40 in the anticodon stem and loop of transfer RNAs. In Bacillus velezensis (strain DSM 23117 / BGSC 10A6 / LMG 26770 / FZB42) (Bacillus amyloliquefaciens subsp. plantarum), this protein is tRNA pseudouridine synthase A.